A 200-amino-acid chain; its full sequence is Inner membrane-spanning protein YciB (200 aa).

A run of 6 helical transmembrane segments spans residues 1–21 (MPPL…FFAN), 37–57 (IGAP…IALA), 66–86 (LAIM…LTLW), 103–123 (LFGG…GYVF), 136–156 (KLTL…EIVW), and 167–187 (FKVW…MPLI).

It belongs to the YciB family.

The protein resides in the cell inner membrane. Its function is as follows. Plays a role in cell envelope biogenesis, maintenance of cell envelope integrity and membrane homeostasis. The protein is Inner membrane-spanning protein YciB of Brucella melitensis biotype 1 (strain ATCC 23456 / CCUG 17765 / NCTC 10094 / 16M).